Here is a 417-residue protein sequence, read N- to C-terminus: Squalene synthase (417 aa).

Residues arginine 52 and arginine 77 each contribute to the NADP(+) site. Mg(2+) contacts are provided by aspartate 80, glutamate 83, and aspartate 84. Arginine 218 contributes to the NADP(+) binding site. The chain crosses the membrane as a helical span at residues 284 to 304; the sequence is SIFNFCAIPQVMAIATLAACY. NADP(+)-binding residues include lysine 315 and arginine 317. Residues 384–404 form a helical membrane-spanning segment; sequence PIYLSFVMLLAALSWQYLSTL.

Belongs to the phytoene/squalene synthase family. The cofactor is Mg(2+).

Its subcellular location is the endoplasmic reticulum membrane. The enzyme catalyses 2 (2E,6E)-farnesyl diphosphate + NADPH + H(+) = squalene + 2 diphosphate + NADP(+). It carries out the reaction 2 (2E,6E)-farnesyl diphosphate + NADH + H(+) = squalene + 2 diphosphate + NAD(+). It catalyses the reaction presqualene diphosphate + NADH + H(+) = squalene + diphosphate + NAD(+). The catalysed reaction is presqualene diphosphate + NADPH + H(+) = squalene + diphosphate + NADP(+). The enzyme catalyses 2 (2E,6E)-farnesyl diphosphate = presqualene diphosphate + diphosphate. It functions in the pathway terpene metabolism; lanosterol biosynthesis; lanosterol from farnesyl diphosphate: step 1/3. Catalyzes the condensation of 2 farnesyl pyrophosphate (FPP) moieties to form squalene. Proceeds in two distinct steps. In the first half-reaction, two molecules of FPP react to form the stable presqualene diphosphate intermediate (PSQPP), with concomitant release of a proton and a molecule of inorganic diphosphate. In the second half-reaction, PSQPP undergoes heterolysis, isomerization, and reduction with NADPH or NADH to form squalene. It is the first committed enzyme of the sterol biosynthesis pathway. The protein is Squalene synthase (FDFT1) of Bos taurus (Bovine).